The chain runs to 376 residues: uncharacterized protein (376 aa).

Residues 1–280 lie on the Lumenal side of the membrane; sequence MPIPIIAHIA…RTPGFRRVVS (280 aa). NADP(+)-binding residues include I66, D115, R178, K233, V270, and T272. Residue K233 is the Lowers pKa of active site Tyr of the active site. Residues 281–301 traverse the membrane as a helical segment; that stretch reads FGKVWGLFLYLLLWPFWWLLL. The Cytoplasmic segment spans residues 302–376; the sequence is KGTIHGAQSF…KKKKIKKSKK (75 aa).

The protein belongs to the short-chain dehydrogenases/reductases (SDR) family.

The protein localises to the cytoplasm. Its subcellular location is the endoplasmic reticulum membrane. May be involved in lipid metabolism. This is an uncharacterized protein from Schizosaccharomyces pombe (strain 972 / ATCC 24843) (Fission yeast).